The following is a 915-amino-acid chain: Protein translocase subunit SecA (915 aa).

ATP is bound by residues Q87, 105-109, and D512; that span reads GEGKT. Residues 849–864 show a composition bias toward low complexity; sequence AAQQQARQAPLPNAPA. The interval 849–915 is disordered; it reads AAQQQARQAP…CHGSRAKDHA (67 aa). Residues 876–891 show a composition bias toward basic and acidic residues; it reads PEEKVARVAAERHIGR. Residues C895, C897, C906, and H907 each coordinate Zn(2+).

This sequence belongs to the SecA family. In terms of assembly, monomer and homodimer. Part of the essential Sec protein translocation apparatus which comprises SecA, SecYEG and auxiliary proteins SecDF-YajC and YidC. Requires Zn(2+) as cofactor.

Its subcellular location is the cell inner membrane. It is found in the cytoplasm. The enzyme catalyses ATP + H2O + cellular proteinSide 1 = ADP + phosphate + cellular proteinSide 2.. In terms of biological role, part of the Sec protein translocase complex. Interacts with the SecYEG preprotein conducting channel. Has a central role in coupling the hydrolysis of ATP to the transfer of proteins into and across the cell membrane, serving both as a receptor for the preprotein-SecB complex and as an ATP-driven molecular motor driving the stepwise translocation of polypeptide chains across the membrane. This Actinobacillus succinogenes (strain ATCC 55618 / DSM 22257 / CCUG 43843 / 130Z) protein is Protein translocase subunit SecA.